The chain runs to 445 residues: TNF receptor-associated factor family protein DDB_G0290971 (445 aa).

The segment at Cys23 to Arg67 adopts an RING-type; degenerate zinc-finger fold. TRAF-type zinc fingers lie at residues Lys133–Ala186 and Ala186–Asp242. Positions Gln269–Leu307 form a coiled coil. Residues Lys314–Ile441 form the MATH domain.

Belongs to the TNF receptor-associated factor family. A subfamily.

It localises to the cytoplasm. In terms of biological role, probable adapter protein and signal transducer that links members of the tumor necrosis factor receptor family to different signaling pathways by association with the receptor cytoplasmic domain and kinases. The chain is TNF receptor-associated factor family protein DDB_G0290971 from Dictyostelium discoideum (Social amoeba).